The sequence spans 738 residues: 1,4-alpha-glucan branching enzyme GlgB (738 aa).

The active-site Nucleophile is the Asp-417. The Proton donor role is filled by Glu-472.

The protein belongs to the glycosyl hydrolase 13 family. GlgB subfamily. As to quaternary structure, monomer.

The enzyme catalyses Transfers a segment of a (1-&gt;4)-alpha-D-glucan chain to a primary hydroxy group in a similar glucan chain.. Its pathway is glycan biosynthesis; glycogen biosynthesis. In terms of biological role, catalyzes the formation of the alpha-1,6-glucosidic linkages in glycogen by scission of a 1,4-alpha-linked oligosaccharide from growing alpha-1,4-glucan chains and the subsequent attachment of the oligosaccharide to the alpha-1,6 position. This is 1,4-alpha-glucan branching enzyme GlgB from Burkholderia pseudomallei (strain 668).